Consider the following 198-residue polypeptide: Translation machinery-associated protein 22 (198 aa).

One can recognise an SUI1 domain in the interval 100 to 171 (IIIKRSERTK…EIVEMIRQQV (72 aa)).

Belongs to the DENR family. In terms of assembly, interacts with the 40S ribosomal subunit.

It is found in the cytoplasm. This Cryptococcus neoformans var. neoformans serotype D (strain B-3501A) (Filobasidiella neoformans) protein is Translation machinery-associated protein 22 (TMA22).